The following is a 544-amino-acid chain: Chaperonin GroEL (544 aa).

ATP is bound by residues 29–32 (TLGP), 86–90 (DGTTT), G413, 476–478 (NAA), and D492. The interval 522–544 (PDPNANNNAAAGANPAAGMGGMM) is disordered. Positions 524–538 (PNANNNAAAGANPAA) are enriched in low complexity.

Belongs to the chaperonin (HSP60) family. In terms of assembly, forms a cylinder of 14 subunits composed of two heptameric rings stacked back-to-back. Interacts with the co-chaperonin GroES.

The protein resides in the cytoplasm. The catalysed reaction is ATP + H2O + a folded polypeptide = ADP + phosphate + an unfolded polypeptide.. In terms of biological role, together with its co-chaperonin GroES, plays an essential role in assisting protein folding. The GroEL-GroES system forms a nano-cage that allows encapsulation of the non-native substrate proteins and provides a physical environment optimized to promote and accelerate protein folding. The chain is Chaperonin GroEL from Lacticaseibacillus casei (strain BL23) (Lactobacillus casei).